Here is a 477-residue protein sequence, read N- to C-terminus: UDP-galactose-lipid carrier transferase (477 aa).

A run of 6 helical transmembrane segments spans residues 16-36 (SLALSDLIFFNIALALAIVLI), 52-72 (LDLKIATHILLSVICVGWFWV), 93-113 (TILIFSIVDLSVSALSKWELS), 115-135 (WIWILTWLLSMAMVPFGRACV), 175-195 (VIAFYDVDGSQTALELFGVPV), and 284-304 (FDLVGALSIITLLLPALVILI). The Cytoplasmic segment spans residues 305 to 477 (FMVSRDGGAP…GVVLKRDGAY (173 aa)).

The protein belongs to the bacterial sugar transferase family.

Its subcellular location is the cell membrane. Its pathway is glycan metabolism; exopolysaccharide biosynthesis. Involved in the biosynthesis of amylovoran which functions as a virulence factor. May act as a sugar transferase and may be involved in the export of the repeating unit by flipping the lipid carrier to the periplasmic face of the inner membrane. The protein is UDP-galactose-lipid carrier transferase (amsG) of Erwinia amylovora (Fire blight bacteria).